Here is a 308-residue protein sequence, read N- to C-terminus: Vomeronasal type-1 receptor 92 (308 aa).

The Extracellular portion of the chain corresponds to 1–18 (MNKDNTLHTIMKITMFSE). A helical membrane pass occupies residues 19 to 39 (VSVGISANSILFFAHLCMLLG). At 40–48 (ENRPKPFHL) the chain is on the cytoplasmic side. The chain crosses the membrane as a helical span at residues 49–69 (YIVSLSLTQLILLITMGLIAV). Residues 70–91 (DMFMSWGRWDSTPCQSLIYLHR) are Extracellular-facing. A disulfide bridge links C83 with C170. A helical membrane pass occupies residues 92-112 (LLRGFTLCAACLLNVFWMITL). Topologically, residues 113-132 (SPRSSCLSKFKHNSPHHISG) are cytoplasmic. Residues 133–153 (AFLFLCVLYMSFSSHLLVSII) form a helical membrane-spanning segment. The Extracellular portion of the chain corresponds to 154–188 (ATPNLTSNIFMYVTQSCSLLPMSYSRTSTFSTTIA). N157 carries an N-linked (GlcNAc...) asparagine glycan. A helical membrane pass occupies residues 189–209 (IREAFLISLMALSSGFMVTLL). The Cytoplasmic portion of the chain corresponds to 210 to 236 (WRHKKQAQHLHSTSLSSKASPERRATR). The chain crosses the membrane as a helical span at residues 237–257 (TILLLMSFFVVLYILENVVFY). The Extracellular portion of the chain corresponds to 258-267 (SRMKFKDGSM). The chain crosses the membrane as a helical span at residues 268-288 (FYCVQIIVSHSYATISPFVFI). At 289-308 (CTEKHMTKILRSVCTRIINI) the chain is on the cytoplasmic side.

Belongs to the G-protein coupled receptor 1 family.

The protein localises to the cell membrane. Functionally, putative pheromone receptor implicated in the regulation of social as well as reproductive behavior. This is Vomeronasal type-1 receptor 92 (Vom1r92) from Rattus norvegicus (Rat).